We begin with the raw amino-acid sequence, 168 residues long: Chorismate pyruvate-lyase (168 aa).

The substrate site is built by M36, R78, L116, and E157.

Belongs to the UbiC family. Monomer.

It localises to the cytoplasm. The catalysed reaction is chorismate = 4-hydroxybenzoate + pyruvate. The protein operates within cofactor biosynthesis; ubiquinone biosynthesis. Functionally, removes the pyruvyl group from chorismate, with concomitant aromatization of the ring, to provide 4-hydroxybenzoate (4HB) for the ubiquinone pathway. The chain is Chorismate pyruvate-lyase from Photorhabdus laumondii subsp. laumondii (strain DSM 15139 / CIP 105565 / TT01) (Photorhabdus luminescens subsp. laumondii).